Reading from the N-terminus, the 514-residue chain is Periplasmic [NiFeSe] hydrogenase large subunit (514 aa).

Residue Glu52 participates in Fe cation binding. Ni(2+)-binding residues include Cys71 and Cys74. The Fe cation site is built by Cys74 and Ile445. Sec493 and Cys496 together coordinate Ni(2+). Residue Sec493 is a non-standard amino acid, selenocysteine. The Fe cation site is built by Cys496 and His499.

It belongs to the [NiFe]/[NiFeSe] hydrogenase large subunit family. As to quaternary structure, heterodimer of a large and a small subunit. The cofactor is Fe cation. Ni(2+) serves as cofactor.

The protein resides in the periplasm. The catalysed reaction is H2 + A = AH2. The polypeptide is Periplasmic [NiFeSe] hydrogenase large subunit (Desulfomicrobium baculatum (Desulfovibrio baculatus)).